A 62-amino-acid polypeptide reads, in one-letter code: Large ribosomal subunit protein bL32 (62 aa).

The tract at residues 1–20 (MAVPARHTSKQKKRSRRGHI) is disordered. Residues 7-20 (HTSKQKKRSRRGHI) show a composition bias toward basic residues.

The protein belongs to the bacterial ribosomal protein bL32 family.

This Lactobacillus acidophilus (strain ATCC 700396 / NCK56 / N2 / NCFM) protein is Large ribosomal subunit protein bL32.